Reading from the N-terminus, the 232-residue chain is MSNNPRSIIAIVPAAGIGSRMGADKPKQYLMLGQQSILGHTLDTLLAHPDIEQVIVALHPQDNYFNQLPQSQHPKLTQVVGGGERADSVLAALDYAHNYNPGAWALVHDAARPCVTHQDITQLIKSVAIHPQGAILAAPVCDTMKRSDASGLIVHTVDRSLLWHALTPQFFPVSILRTHLSAALAAQVPITDEASAMEWAGVMPGLVNGRMDNIKVTHPDDLQLAALFMSQQ.

This sequence belongs to the IspD/TarI cytidylyltransferase family. IspD subfamily.

The enzyme catalyses 2-C-methyl-D-erythritol 4-phosphate + CTP + H(+) = 4-CDP-2-C-methyl-D-erythritol + diphosphate. It participates in isoprenoid biosynthesis; isopentenyl diphosphate biosynthesis via DXP pathway; isopentenyl diphosphate from 1-deoxy-D-xylulose 5-phosphate: step 2/6. Catalyzes the formation of 4-diphosphocytidyl-2-C-methyl-D-erythritol from CTP and 2-C-methyl-D-erythritol 4-phosphate (MEP). The protein is 2-C-methyl-D-erythritol 4-phosphate cytidylyltransferase of Shewanella frigidimarina (strain NCIMB 400).